Reading from the N-terminus, the 137-residue chain is DNA-binding protein H-NS (137 aa).

A DNA-binding region spans residues Gln-112–Ala-117.

It belongs to the histone-like protein H-NS family. In terms of assembly, homodimer that oligomerizes on DNA into higher-order complexes that form bridges between disparate regions of DNA compacting it. Interacts with Hha, Cnu and StpA.

The protein resides in the cytoplasm. It is found in the nucleoid. In terms of biological role, a DNA-binding protein implicated in transcriptional repression and chromosome organization and compaction. Binds nucleation sites in AT-rich DNA and bridges them, forming higher-order nucleoprotein complexes and condensing the chromosome. As many horizontally transferred genes are AT-rich, it plays a central role in silencing foreign genes. A subset of genes are repressed by H-NS in association with other proteins. In Escherichia coli O6:H1 (strain CFT073 / ATCC 700928 / UPEC), this protein is DNA-binding protein H-NS (hns).